Here is a 338-residue protein sequence, read N- to C-terminus: MKVFYDKDCDLSIIQGKKVAIIGYGSQGHAQACNLKDSGVDVTVGLRKGSATVAKAEAHGLKVTDVAAAVAGADLVMILTPDEFQSQLYKNEIEPNIKKGATLAFSHGFAIHYNQVVPRADLDVIMIAPKAPGHTVRSEFVKGGGIPDLIAIYQDASGNAKNVALSYAAGVGGGRTGIIETTFKDETETDLFGEQAVLCGGTVELVKAGFETLVEAGYAPEMAYFECLHELKLIVDLMYEGGIANMNYSISNNAEYGEYVTGPEVINAESRQAMRNALKRIQDGEYAKMFISEGATGYPSMTAKRRNNAAHGIEIIGEQLRSMMPWIGANKIVDKAKN.

One can recognise a KARI N-terminal Rossmann domain in the interval 1-181; the sequence is MKVFYDKDCD…GGGRTGIIET (181 aa). NADP(+) contacts are provided by residues 24–27, arginine 47, serine 50, threonine 52, and 82–85; these read YGSQ and DEFQ. The active site involves histidine 107. Residue glycine 133 participates in NADP(+) binding. The KARI C-terminal knotted domain occupies 182–327; it reads TFKDETETDL…EQLRSMMPWI (146 aa). 4 residues coordinate Mg(2+): aspartate 190, glutamate 194, glutamate 226, and glutamate 230. Serine 251 provides a ligand contact to substrate.

It belongs to the ketol-acid reductoisomerase family. The cofactor is Mg(2+).

The catalysed reaction is (2R)-2,3-dihydroxy-3-methylbutanoate + NADP(+) = (2S)-2-acetolactate + NADPH + H(+). It catalyses the reaction (2R,3R)-2,3-dihydroxy-3-methylpentanoate + NADP(+) = (S)-2-ethyl-2-hydroxy-3-oxobutanoate + NADPH + H(+). Its pathway is amino-acid biosynthesis; L-isoleucine biosynthesis; L-isoleucine from 2-oxobutanoate: step 2/4. It participates in amino-acid biosynthesis; L-valine biosynthesis; L-valine from pyruvate: step 2/4. Involved in the biosynthesis of branched-chain amino acids (BCAA). Catalyzes an alkyl-migration followed by a ketol-acid reduction of (S)-2-acetolactate (S2AL) to yield (R)-2,3-dihydroxy-isovalerate. In the isomerase reaction, S2AL is rearranged via a Mg-dependent methyl migration to produce 3-hydroxy-3-methyl-2-ketobutyrate (HMKB). In the reductase reaction, this 2-ketoacid undergoes a metal-dependent reduction by NADPH to yield (R)-2,3-dihydroxy-isovalerate. The sequence is that of Ketol-acid reductoisomerase (NADP(+)) from Pseudomonas fluorescens (strain ATCC BAA-477 / NRRL B-23932 / Pf-5).